Reading from the N-terminus, the 122-residue chain is Iron-sulfur cluster assembly protein SufA (122 aa).

[2Fe-2S] cluster contacts are provided by cysteine 50, cysteine 114, and cysteine 116. Residues cysteine 50, cysteine 114, and cysteine 116 each contribute to the [4Fe-4S] cluster site.

The protein belongs to the HesB/IscA family. In terms of assembly, homodimer. Interacts with SufB and SufC.

Member of gene cluster sufABCDSE that mediates iron-sulfur cluster assembly under oxidative stress and iron limitation conditions. Binds [2Fe-2S] and [4Fe-4S] clusters by mobilizing sulfur atoms provided by the SufS-SufE cysteine desulfurase system and then transfers the assembled Fe-S clusters to target proteins including ferredoxin and aconitase. Seems to act as a Fe-S cluster carrier rather than a scaffold, this role being performed by SufB and SufC. The polypeptide is Iron-sulfur cluster assembly protein SufA (sufA) (Escherichia coli (strain K12)).